The following is a 373-amino-acid chain: Dual-specificity RNA methyltransferase RlmN (373 aa).

E94 acts as the Proton acceptor in catalysis. The Radical SAM core domain maps to 100–339 (EEDRATLCVS…VIVRKTRGDD (240 aa)). C107 and C344 are oxidised to a cystine. The [4Fe-4S] cluster site is built by C114, C118, and C121. Residues 168-169 (GE), S200, 222-224 (SIH), and N301 each bind S-adenosyl-L-methionine. C344 functions as the S-methylcysteine intermediate in the catalytic mechanism.

The protein belongs to the radical SAM superfamily. RlmN family. Requires [4Fe-4S] cluster as cofactor.

Its subcellular location is the cytoplasm. The catalysed reaction is adenosine(2503) in 23S rRNA + 2 reduced [2Fe-2S]-[ferredoxin] + 2 S-adenosyl-L-methionine = 2-methyladenosine(2503) in 23S rRNA + 5'-deoxyadenosine + L-methionine + 2 oxidized [2Fe-2S]-[ferredoxin] + S-adenosyl-L-homocysteine. It carries out the reaction adenosine(37) in tRNA + 2 reduced [2Fe-2S]-[ferredoxin] + 2 S-adenosyl-L-methionine = 2-methyladenosine(37) in tRNA + 5'-deoxyadenosine + L-methionine + 2 oxidized [2Fe-2S]-[ferredoxin] + S-adenosyl-L-homocysteine. Its function is as follows. Specifically methylates position 2 of adenine 2503 in 23S rRNA and position 2 of adenine 37 in tRNAs. m2A2503 modification seems to play a crucial role in the proofreading step occurring at the peptidyl transferase center and thus would serve to optimize ribosomal fidelity. The sequence is that of Dual-specificity RNA methyltransferase RlmN from Shewanella loihica (strain ATCC BAA-1088 / PV-4).